A 340-amino-acid chain; its full sequence is Ferrochelatase (340 aa).

Residues H202 and E283 each contribute to the Fe cation site.

Belongs to the ferrochelatase family.

Its subcellular location is the cytoplasm. It carries out the reaction heme b + 2 H(+) = protoporphyrin IX + Fe(2+). It functions in the pathway porphyrin-containing compound metabolism; protoheme biosynthesis; protoheme from protoporphyrin-IX: step 1/1. Functionally, catalyzes the ferrous insertion into protoporphyrin IX. The chain is Ferrochelatase from Acinetobacter baylyi (strain ATCC 33305 / BD413 / ADP1).